The primary structure comprises 607 residues: CUB and zona pellucida-like domain-containing protein 1 (607 aa).

The signal sequence occupies residues 1–19 (MEVTGRLFIWAILAVSCRA). The Lumenal portion of the chain corresponds to 20-568 (QLNSTAAEGR…AEISKQPLSH (549 aa)). Asn22 carries an N-linked (GlcNAc...) asparagine glycan. Cys32 and Cys58 are oxidised to a cystine. CUB domains are found at residues 32-146 (CTAS…YFFS) and 154-265 (CGGY…YAST). Asn67 carries N-linked (GlcNAc...) asparagine glycosylation. 2 cysteine pairs are disulfide-bonded: Cys85-Cys107 and Cys154-Cys180. Asn195 carries an N-linked (GlcNAc...) asparagine glycan. Cysteines 207 and 229 form a disulfide. The 244-residue stretch at 276–519 (SCASDKMRVI…SRCNQGCVSR (244 aa)) folds into the ZP domain. The N-linked (GlcNAc...) asparagine glycan is linked to Asn419. A disulfide bond links Cys442 and Cys498. The helical transmembrane segment at 569 to 589 (LHLFSFMVLALNVVIVVTATV) threads the bilayer. Topologically, residues 590 to 607 (RHFLNRWKDHGYQKLQVY) are cytoplasmic.

As to expression, expressed predominantly in epithelium of uterus and oviduct.

It localises to the zymogen granule membrane. In terms of biological role, localized to zymogen granules, where it functions in trypsinogen activation. May indirectly regulate cell motility, cell-cell and cell/extracellular matrix interactions. The protein is CUB and zona pellucida-like domain-containing protein 1 of Rattus norvegicus (Rat).